Here is a 374-residue protein sequence, read N- to C-terminus: 8-amino-7-oxononanoate synthase (374 aa).

2 residues coordinate substrate: Arg-22 and Arg-29. Position 109–110 (109–110) interacts with pyridoxal 5'-phosphate; the sequence is GY. His-134 contacts substrate. Pyridoxal 5'-phosphate contacts are provided by residues Ser-182, 207-210, and 227-230; these read DDAH and TLSK. Lys-230 carries the post-translational modification N6-(pyridoxal phosphate)lysine. Thr-339 serves as a coordination point for substrate.

Belongs to the class-II pyridoxal-phosphate-dependent aminotransferase family. BioF subfamily. Homodimer. Requires pyridoxal 5'-phosphate as cofactor.

It catalyses the reaction 6-carboxyhexanoyl-[ACP] + L-alanine + H(+) = (8S)-8-amino-7-oxononanoate + holo-[ACP] + CO2. It functions in the pathway cofactor biosynthesis; biotin biosynthesis. Its function is as follows. Catalyzes the decarboxylative condensation of pimeloyl-[acyl-carrier protein] and L-alanine to produce 8-amino-7-oxononanoate (AON), [acyl-carrier protein], and carbon dioxide. This Methylobacterium radiotolerans (strain ATCC 27329 / DSM 1819 / JCM 2831 / NBRC 15690 / NCIMB 10815 / 0-1) protein is 8-amino-7-oxononanoate synthase.